A 37-amino-acid chain; its full sequence is Esculentin-2JDb (37 aa).

Cysteines 31 and 37 form a disulfide.

As to expression, expressed by the skin glands.

It is found in the secreted. Its function is as follows. Has antibacterial activity against E.coli and S.aureus strains. This is Esculentin-2JDb from Odorrana jingdongensis (Jingdong frog).